The chain runs to 72 residues: UPF0154 protein BH2350 (72 aa).

The helical transmembrane segment at 3 to 23 (WMILLWITLGIVIGIAIGFFI) threads the bilayer.

The protein belongs to the UPF0154 family.

The protein localises to the membrane. In Halalkalibacterium halodurans (strain ATCC BAA-125 / DSM 18197 / FERM 7344 / JCM 9153 / C-125) (Bacillus halodurans), this protein is UPF0154 protein BH2350.